Consider the following 576-residue polypeptide: Malonate--CoA ligase ACSF3, mitochondrial (576 aa).

The transit peptide at 1 to 83 (MLPHVVLTFR…RSLRLSQEIC (83 aa)) directs the protein to the mitochondrion. ATP is bound by residues 202–210 (TSGTTGRPK), aspartate 457, arginine 471, and lysine 563.

Belongs to the ATP-dependent AMP-binding enzyme family.

The protein localises to the mitochondrion. The enzyme catalyses tetracosanoate + ATP + CoA = tetracosanoyl-CoA + AMP + diphosphate. It catalyses the reaction malonate + ATP + CoA = malonyl-CoA + AMP + diphosphate. Catalyzes the initial reaction in intramitochondrial fatty acid synthesis, by activating malonate and methylmalonate, but not acetate, into their respective CoA thioester. May have some preference toward very-long-chain substrates. The protein is Malonate--CoA ligase ACSF3, mitochondrial of Homo sapiens (Human).